The primary structure comprises 1816 residues: Kinesin-like protein KIF1B (1816 aa).

Ser2 bears the N-acetylserine mark. One can recognise a Kinesin motor domain in the interval 5-354 (SVKVAVRVRP…LRYADRAKQI (350 aa)). 97–104 (GQTGAGKS) is an ATP binding site. The segment at 270–350 (NINKSLTTLG…TLSTLRYADR (81 aa)) is interaction with KIFBP. Coiled coils occupy residues 365-386 (NAKL…LRAQ) and 470-502 (GEEA…EAIR). The region spanning 556–612 (TRVGQADAERRQDIVLSGAHIKEEHCLFRSERSNTGEVIVTLEPCERSETYVNGKRV) is the FHA domain. Residues Thr647 and Thr652 each carry the phosphothreonine modification. Coiled-coil stretches lie at residues 668 to 737 (EKQG…EEEV) and 841 to 869 (SLDK…AQDD). Ser1054, Ser1057, Ser1416, Ser1454, and Ser1487 each carry phosphoserine. A disordered region spans residues 1522–1571 (VPKSLSDSLSPSLSSGTLSTSTSISSQISTTTFESAITPSESSGYDSADV). A compositionally biased stretch (low complexity) spans 1525–1553 (SLSDSLSPSLSSGTLSTSTSISSQISTTT). Residues 1554–1566 (FESAITPSESSGY) show a composition bias toward polar residues. A phosphoserine mark is found at Ser1573, Ser1603, Ser1610, and Ser1613. Low complexity predominate over residues 1620–1637 (SVSSFSSSTLTPSSTCPS). Residues 1620 to 1659 (SVSSFSSSTLTPSSTCPSLVDSRSSSMDQKTPEANSRASS) are disordered. Polar residues predominate over residues 1640-1659 (DSRSSSMDQKTPEANSRASS). In terms of domain architecture, PH spans 1702–1799 (VSKKGYLHFK…WLYAFNPLLA (98 aa)).

It belongs to the TRAFAC class myosin-kinesin ATPase superfamily. Kinesin family. Unc-104 subfamily. As to quaternary structure, monomer. Interacts with KIFBP; positively regulates KIF1B microtubule motor activity. Interacts (via C-terminus end of the kinesin-motor domain) with CHP1; the interaction occurs in a calcium-dependent manner. In terms of assembly, interacts with MADD (via death domain); links this isoform to Rab3-carrying vesicles in anterograde synaptic vesicle transport. In terms of tissue distribution, expressed in the brain (at protein level).

The protein localises to the cytoplasm. It localises to the cytoskeleton. The protein resides in the cytoplasmic vesicle. It is found in the secretory vesicle. Its subcellular location is the synaptic vesicle membrane. The protein localises to the mitochondrion. It catalyses the reaction ATP + H2O + a kinesin associated with a microtubule at position (n) = ADP + phosphate a kinesin associated with a microtubule at position (n+1, toward the plus end).. In terms of biological role, has a plus-end-directed microtubule motor activity and functions as a motor for transport of vesicles and organelles along microtubules. Functionally, has a plus-end-directed microtubule motor activity and functions as a motor for anterograde synaptic vesicle transport along axonal microtubules from the cell body to the presynapse in neuronal cells. Functions as a downstream effector in a developmental apoptotic pathway that is activated when nerve growth factor (NGF) becomes limiting for neuronal progenitor cells. Has a plus-end-directed microtubule motor activity and functions as a motor for anterograde transport of mitochondria. This is Kinesin-like protein KIF1B from Mus musculus (Mouse).